The sequence spans 661 residues: Fructose-1,6-bisphosphatase class 3 (661 aa).

It belongs to the FBPase class 3 family. Mn(2+) serves as cofactor.

It catalyses the reaction beta-D-fructose 1,6-bisphosphate + H2O = beta-D-fructose 6-phosphate + phosphate. Its pathway is carbohydrate biosynthesis; gluconeogenesis. This is Fructose-1,6-bisphosphatase class 3 from Clostridioides difficile (strain 630) (Peptoclostridium difficile).